Reading from the N-terminus, the 302-residue chain is tRNA pseudouridine synthase B (302 aa).

Asp-40 acts as the Nucleophile in catalysis.

Belongs to the pseudouridine synthase TruB family. Type 1 subfamily.

The enzyme catalyses uridine(55) in tRNA = pseudouridine(55) in tRNA. Functionally, responsible for synthesis of pseudouridine from uracil-55 in the psi GC loop of transfer RNAs. The chain is tRNA pseudouridine synthase B from Shouchella clausii (strain KSM-K16) (Alkalihalobacillus clausii).